The following is a 131-amino-acid chain: Profilin-2 (131 aa).

It belongs to the profilin family. As to quaternary structure, occurs in many kinds of cells as a complex with monomeric actin in a 1:1 ratio.

The protein resides in the cytoplasm. It localises to the cytoskeleton. In terms of biological role, binds to actin and affects the structure of the cytoskeleton. At high concentrations, profilin prevents the polymerization of actin, whereas it enhances it at low concentrations. By binding to PIP2, it inhibits the formation of IP3 and DG. The sequence is that of Profilin-2 from Malus domestica (Apple).